Consider the following 160-residue polypeptide: Cytochrome c-type biogenesis protein CcmE (160 aa).

The Cytoplasmic portion of the chain corresponds to 1 to 8 (MSAPRKTR). Residues 9–29 (LYAILAVVCGAVLTIALMLYA) form a helical; Signal-anchor for type II membrane protein membrane-spanning segment. Residues 30 to 160 (LSSNIDLFYT…PAAGPEGKRL (131 aa)) lie on the Periplasmic side of the membrane. The heme site is built by histidine 130 and tyrosine 134.

Belongs to the CcmE/CycJ family.

The protein localises to the cell inner membrane. In terms of biological role, heme chaperone required for the biogenesis of c-type cytochromes. Transiently binds heme delivered by CcmC and transfers the heme to apo-cytochromes in a process facilitated by CcmF and CcmH. In Pectobacterium atrosepticum (strain SCRI 1043 / ATCC BAA-672) (Erwinia carotovora subsp. atroseptica), this protein is Cytochrome c-type biogenesis protein CcmE.